The primary structure comprises 469 residues: Argininosuccinate lyase (469 aa).

It belongs to the lyase 1 family. Argininosuccinate lyase subfamily.

It is found in the cytoplasm. It catalyses the reaction 2-(N(omega)-L-arginino)succinate = fumarate + L-arginine. It functions in the pathway amino-acid biosynthesis; L-arginine biosynthesis; L-arginine from L-ornithine and carbamoyl phosphate: step 3/3. The protein is Argininosuccinate lyase of Paracoccus denitrificans (strain Pd 1222).